Reading from the N-terminus, the 229-residue chain is Uracil-DNA glycosylase (229 aa).

Residue aspartate 64 is the Proton acceptor of the active site.

This sequence belongs to the uracil-DNA glycosylase (UDG) superfamily. UNG family. As to quaternary structure, monomer.

It localises to the cytoplasm. The enzyme catalyses Hydrolyzes single-stranded DNA or mismatched double-stranded DNA and polynucleotides, releasing free uracil.. Its function is as follows. Excises uracil residues from the DNA which can arise as a result of misincorporation of dUMP residues by DNA polymerase or due to deamination of cytosine. The chain is Uracil-DNA glycosylase from Escherichia coli O157:H7.